Consider the following 598-residue polypeptide: Elongation factor 4 (598 aa).

Residues 2-184 (DHIRNFSIIA…AIVKRVPPPR (183 aa)) enclose the tr-type G domain. GTP is bound by residues 14–19 (DHGKST) and 131–134 (NKID).

Belongs to the TRAFAC class translation factor GTPase superfamily. Classic translation factor GTPase family. LepA subfamily.

It localises to the cell inner membrane. The catalysed reaction is GTP + H2O = GDP + phosphate + H(+). Required for accurate and efficient protein synthesis under certain stress conditions. May act as a fidelity factor of the translation reaction, by catalyzing a one-codon backward translocation of tRNAs on improperly translocated ribosomes. Back-translocation proceeds from a post-translocation (POST) complex to a pre-translocation (PRE) complex, thus giving elongation factor G a second chance to translocate the tRNAs correctly. Binds to ribosomes in a GTP-dependent manner. The polypeptide is Elongation factor 4 (Syntrophus aciditrophicus (strain SB)).